A 408-amino-acid chain; its full sequence is L,D-transpeptidase 2 (408 aa).

The N-terminal stretch at 1–34 is a signal peptide; it reads MPKVGIAAQAGRTRVRRAWLTALMMTAVMIGAVA. Residue C35 is the site of N-palmitoyl cysteine attachment. C35 carries S-diacylglycerol cysteine lipidation. The Ca(2+) site is built by D232, E235, and G236. The 126-residue stretch at 253–378 folds into the L,D-TPase catalytic domain; sequence VIATADDNTK…VKRGDIVEVV (126 aa). Residues Y318 and 331–332 each bind substrate; that span reads SG. H336 (proton donor/acceptor) is an active-site residue. C354 functions as the Nucleophile in the catalytic mechanism. A substrate-binding site is contributed by N356.

Monomer.

The protein localises to the cell membrane. Its pathway is cell wall biogenesis; peptidoglycan biosynthesis. Is irreversibly inactivated by the beta-lactams carbapenems via the formation of a covalent adduct resulting from acylation of the catalytic Cys. Its function is as follows. Generates 3-&gt;3 cross-links in peptidoglycan, catalyzing the cleavage of the mDap(3)-D-Ala(4) bond of a tetrapeptide donor stem and the formation of a bond between the carbonyl of mDap(3) of the donor stem and the side chain of mDap(3) of the acceptor stem. Is specific for donor substrates containing a stem tetrapeptide since it cannot use pentapeptide stems. Is essential for virulence in a mouse model of acute infection. The sequence is that of L,D-transpeptidase 2 (ldtB) from Mycobacterium tuberculosis (strain CDC 1551 / Oshkosh).